Reading from the N-terminus, the 730-residue chain is Acetylene hydratase (730 aa).

[4Fe-4S] cluster-binding residues include cysteine 9 and cysteine 12. Aspartate 13 is a catalytic residue. Residues cysteine 16 and cysteine 46 each contribute to the [4Fe-4S] cluster site. Residues lysine 48, 111–114 (TEIN), cysteine 141, 172–173 (KN), 177–179 (HNW), 199–202 (LDPR), 218–221 (YGTD), serine 296, glutamine 300, 416–418 (ASN), 422–423 (GY), 442–444 (YDQ), aspartate 460, arginine 465, 602–613 (FAGLREDSNFQS), arginine 606, histidine 676, aspartate 699, and arginine 720 each bind W-bis(molybdopterin guanine dinucleotide).

The protein belongs to the prokaryotic molybdopterin-containing oxidoreductase family. In terms of assembly, monomer. Requires [4Fe-4S] cluster as cofactor. The cofactor is W-bis(molybdopterin guanine dinucleotide).

It carries out the reaction acetaldehyde = acetylene + H2O. Catalyzes the hydration of acetylene to form acetaldehyde. Ethylene cannot act as a substrate. The polypeptide is Acetylene hydratase (Syntrophotalea acetylenica (Pelobacter acetylenicus)).